A 403-amino-acid polypeptide reads, in one-letter code: Protein STRICTOSIDINE SYNTHASE-LIKE 13 (403 aa).

Positions 1 to 42 (MEKKGQHGTYESMMTHHPILCIIALSVLFIAIDPFHMSPIGG) are cleaved as a signal peptide. N-linked (GlcNAc...) asparagine glycosylation is found at asparagine 66 and asparagine 206.

This sequence belongs to the strictosidine synthase family.

It localises to the vacuole. In terms of biological role, required for the exine formation during pollen development. This is Protein STRICTOSIDINE SYNTHASE-LIKE 13 from Arabidopsis thaliana (Mouse-ear cress).